We begin with the raw amino-acid sequence, 141 residues long: Nucleoside diphosphate kinase (141 aa).

ATP-binding residues include K11, F59, R87, T93, R104, and N114. The active-site Pros-phosphohistidine intermediate is the H117.

It belongs to the NDK family. As to quaternary structure, homotetramer. Mg(2+) is required as a cofactor.

Its subcellular location is the cytoplasm. The enzyme catalyses a 2'-deoxyribonucleoside 5'-diphosphate + ATP = a 2'-deoxyribonucleoside 5'-triphosphate + ADP. It catalyses the reaction a ribonucleoside 5'-diphosphate + ATP = a ribonucleoside 5'-triphosphate + ADP. In terms of biological role, major role in the synthesis of nucleoside triphosphates other than ATP. The ATP gamma phosphate is transferred to the NDP beta phosphate via a ping-pong mechanism, using a phosphorylated active-site intermediate. This is Nucleoside diphosphate kinase from Bordetella avium (strain 197N).